A 251-amino-acid polypeptide reads, in one-letter code: MITIKNQEQIQKMKIAGQVLAKGLNLLKSMIKPGVNCLDLDKAFEEFIKQNGCESNFKNYQGFPKTICISINDQLIHGIPRDRVLLDGDVVSIDAGCMYEKWHADSAFTMVCGIAKNKKNDILIRVTEEALELAIAELKPGIRVGTIGSIIQNYVESFDFSVPRDYTGHGIGLALHEDPYIPNYGIPNTGIRLQEGMVICIEPMVQMGTYKTKIADDKWTVYSADHSITAHFEHTILITKDGCEVLTKTER.

Residue His-77 participates in substrate binding. Residues Asp-94, Asp-105, and His-169 each coordinate a divalent metal cation. Residue His-176 participates in substrate binding. Glu-202 and Glu-233 together coordinate a divalent metal cation.

Belongs to the peptidase M24A family. Methionine aminopeptidase type 1 subfamily. Monomer. Co(2+) is required as a cofactor. The cofactor is Zn(2+). Requires Mn(2+) as cofactor. It depends on Fe(2+) as a cofactor.

The enzyme catalyses Release of N-terminal amino acids, preferentially methionine, from peptides and arylamides.. Removes the N-terminal methionine from nascent proteins. The N-terminal methionine is often cleaved when the second residue in the primary sequence is small and uncharged (Met-Ala-, Cys, Gly, Pro, Ser, Thr, or Val). Requires deformylation of the N(alpha)-formylated initiator methionine before it can be hydrolyzed. In Mycoplasma capricolum subsp. capricolum (strain California kid / ATCC 27343 / NCTC 10154), this protein is Methionine aminopeptidase.